The primary structure comprises 180 residues: Endothelin-2 (180 aa).

Residues 1 to 26 form the signal peptide; the sequence is MVALPTAWCSVALALLVALHEGKSQS. Positions 27–47 are excised as a propeptide; the sequence is AATSEEPPAPSARARGSHLRL. 2 disulfides stabilise this stretch: cysteine 50–cysteine 64 and cysteine 52–cysteine 60. Residues 71–180 constitute a propeptide that is removed on maturation; sequence VNTPGQTAPY…ESSHSRWRKR (110 aa). The segment at 97–112 is endothelin-like; that stretch reads CECYSTRDSACVTFCH. Residues 157 to 180 are disordered; the sequence is NFTRHQQQKATREPESSHSRWRKR.

Belongs to the endothelin/sarafotoxin family.

Its subcellular location is the secreted. In terms of biological role, endothelins are endothelium-derived vasoconstrictor peptides. The sequence is that of Endothelin-2 (EDN2) from Atelerix albiventris (Middle-African hedgehog).